Reading from the N-terminus, the 421-residue chain is Fusaric acid cluster transcription factor FUB10 (421 aa).

The zn(2)-C6 fungal-type DNA-binding region spans 16–47 (CDRCRAQKLRCHRDSGHSTDACLRCLKSGIEC). The segment at 50–92 (SKARPTGRPPSRQVQPTVVVEQGDTSSSSHTTDSSPSAGGTDM) is disordered. Residues 74 to 86 (TSSSSHTTDSSPS) are compositionally biased toward low complexity.

The protein localises to the nucleus. Functionally, transcription factor that regulates the expression of the gene cluster that mediates the biosynthesis of fusaric acid, a mycotoxin with low to moderate toxicity to animals and humans, but with high phytotoxic properties. The protein is Fusaric acid cluster transcription factor FUB10 of Gibberella moniliformis (strain M3125 / FGSC 7600) (Maize ear and stalk rot fungus).